Consider the following 962-residue polypeptide: Oncostatin-M-specific receptor subunit beta (962 aa).

The N-terminal stretch at 1–28 (MAFSVVLHQVTFLLAVLSLRTSQSKVLG) is a signal peptide. Residues 29 to 738 (EPLQLTPEIH…VTTPDVRSHM (710 aa)) are Extracellular-facing. N-linked (GlcNAc...) asparagine glycosylation is present at N219. Fibronectin type-III domains are found at residues 237–332 (EPKN…VHPK), 333–426 (APHD…TPEA), 428–527 (PSEA…SGHE), 528–621 (EVHE…TQEL), and 623–734 (PSVN…TPDV). C243 and C253 are joined by a disulfide. Residue N324 is glycosylated (N-linked (GlcNAc...) asparagine). The WSXWS motif motif lies at 413 to 417 (WSDWM). N492, N578, and N723 each carry an N-linked (GlcNAc...) asparagine glycan. A helical transmembrane segment spans residues 739 to 759 (LLQIILPMTLGVFLSIIVCYW). At 760 to 962 (KSQWVKEKCY…ASLKENNLTS (203 aa)) the chain is on the cytoplasmic side. The Box 1 motif motif lies at 768 to 776 (CYPDIPNPY). Residues 818–840 (VGSGKLHTEDVPTKPPLVPTEKD) are disordered.

This sequence belongs to the type I cytokine receptor family. Type 2 subfamily. Heterodimer composed of OSMR and IL6ST (type II OSM receptor). Heterodimer with IL31RA to form the IL31 receptor. In terms of tissue distribution, widely expressed. Expressed at high levels in the liver, skin and spleen. In the liver it is expressed exclusively in the oval cells.

The protein resides in the membrane. Functionally, associates with IL31RA to form the IL31 receptor. Binds IL31 and activates STAT1, STAT3 and STAT5. Capable of transducing OSM-specific signaling events. The OSM/OSM-R system is pivotal in the differentiation of oval cells into hepatocytes, thereby promoting liver regeneration. The polypeptide is Oncostatin-M-specific receptor subunit beta (Osmr) (Rattus norvegicus (Rat)).